Here is a 400-residue protein sequence, read N- to C-terminus: MASKQLWRWHGITGDGNAQDGMLWAESRTLLLMALQQQMVTPLSLKRIAINSAQWRGDKSAEVIHQLATLLKAGLTLSEGLALLAEQHPSKQWQALLQSLAHDLEQGIAFSNALLPWSEVFPPLYQAMIRTGELTGKLDECCFELARQQKAQRQLTDKVKSALRYPIIILAMAIMVVVAMLHFVLPEFAAIYKTFNTPLPALTQGIMTLADFSGEWSWLLVLFGFLLAIANKLLMRRPTWLIVRQKLLLRIPIMGSLMRGQKLTQIFTILALTQSAGITFLQGVESVRETMRCPYWVQLLTQIQHDISNGQPIWLALKNTGEFSPLCLQLVRTGEASGSLDLMLDNLAHHHRENTMALADNLAALLEPALLIITGGIIGTLVVAMYLPIFHLGDAMSGMG.

Helical transmembrane passes span 165 to 185, 209 to 229, and 370 to 390; these read YPIIILAMAIMVVVAMLHFVL, LADFSGEWSWLLVLFGFLLAI, and LLIITGGIIGTLVVAMYLPIF.

Belongs to the GSP F family.

Its subcellular location is the cell inner membrane. This is Protein transport protein HofC homolog (hofC) from Escherichia coli (strain K12).